The primary structure comprises 942 residues: Eukaryotic translation initiation factor 3 subunit A (942 aa).

Positions 320 to 494 constitute a PCI domain; it reads FKKYSSIILL…NTVTFFKDPF (175 aa). Coiled-coil stretches lie at residues 499–529, 588–669, 705–734, and 821–912; these read KAAG…GEEI, ITQT…KQRE, SKLS…AYRK, and IEEV…RKAQ. The disordered stretch occupies residues 502–546; it reads GTVEEEEEEEEEEGEEVEGEEAETGEEIVEEGEEHENEENKEPEP. The segment covering 504-538 has biased composition (acidic residues); sequence VEEEEEEEEEEGEEVEGEEAETGEEIVEEGEEHEN. Composition is skewed to basic and acidic residues over residues 836–870 and 889–911; these read RKAE…ERKS and RSAK…ERKA. The disordered stretch occupies residues 836 to 942; it reads RKAEIEAEER…KMKLRRASKK (107 aa).

This sequence belongs to the eIF-3 subunit A family. In terms of assembly, component of the eukaryotic translation initiation factor 3 (eIF-3) complex.

Its subcellular location is the cytoplasm. In terms of biological role, RNA-binding component of the eukaryotic translation initiation factor 3 (eIF-3) complex, which is involved in protein synthesis of a specialized repertoire of mRNAs and, together with other initiation factors, stimulates binding of mRNA and methionyl-tRNAi to the 40S ribosome. The eIF-3 complex specifically targets and initiates translation of a subset of mRNAs involved in cell proliferation. The protein is Eukaryotic translation initiation factor 3 subunit A of Vanderwaltozyma polyspora (strain ATCC 22028 / DSM 70294 / BCRC 21397 / CBS 2163 / NBRC 10782 / NRRL Y-8283 / UCD 57-17) (Kluyveromyces polysporus).